The chain runs to 556 residues: MSTTEPAAPVAPLDITATEEWAALTTHLREISEVSLRDLFAADPRRGETFAAEADGLYLDYSKNRLTARTVELLTALARRAGLADRIEAMFRGERINVTENRPVLHVALRAPAGTRIEVDGVDVVPDVHRVLDAMSQFADRVRSGDWLGATGERIRTVVNIGIGGSDLGPAMAYDALRDYADRSIEVRFVSNVDPTDIWEATADLDPASTLFIVSSKTFTTLETISNARAARSWLTGLLGEDAVSRHFVAVSTNAEKVAEFGIDTVNMFEFWDWVGGRYSVDCAIGLSLMIAIGPPNFREFLAGFAAMDTHFRTAPFERNLPVLLGLIGLWYRDFFGTATHAVLPYSHYLGRFPAYLQQLDMESNGKSVDLTGRPVSTPTGPIVWGTPGTNGQHAYYQLLHQGTTIVPADFIGFVRPNHPGVGTADGAGVDQHALLLANFLAQTEALAFGRTAAEVAAEGVTPDLVAHRTFPGNRPSNTLLAQKLTPFALGQLIALYEHKVFTQGVIWGINSFDQWGVELGKVLAGRIIPELGSEQEPELGHDSSTNALIKRLRAG.

The active-site Proton donor is Glu-363. Catalysis depends on residues His-394 and Lys-522.

It belongs to the GPI family.

Its subcellular location is the cytoplasm. The enzyme catalyses alpha-D-glucose 6-phosphate = beta-D-fructose 6-phosphate. It participates in carbohydrate biosynthesis; gluconeogenesis. Its pathway is carbohydrate degradation; glycolysis; D-glyceraldehyde 3-phosphate and glycerone phosphate from D-glucose: step 2/4. Functionally, catalyzes the reversible isomerization of glucose-6-phosphate to fructose-6-phosphate. The sequence is that of Glucose-6-phosphate isomerase from Frankia casuarinae (strain DSM 45818 / CECT 9043 / HFP020203 / CcI3).